A 271-amino-acid polypeptide reads, in one-letter code: 3-methyl-2-oxobutanoate hydroxymethyltransferase (271 aa).

Mg(2+) contacts are provided by Asp-44 and Asp-83. 3-methyl-2-oxobutanoate-binding positions include Asp-44–Ser-45, Asp-83, and Lys-112. Glu-114 is a binding site for Mg(2+). The active-site Proton acceptor is the Glu-181.

The protein belongs to the PanB family. In terms of assembly, homodecamer; pentamer of dimers. Requires Mg(2+) as cofactor.

It is found in the cytoplasm. It carries out the reaction 3-methyl-2-oxobutanoate + (6R)-5,10-methylene-5,6,7,8-tetrahydrofolate + H2O = 2-dehydropantoate + (6S)-5,6,7,8-tetrahydrofolate. It participates in cofactor biosynthesis; coenzyme A biosynthesis. Its function is as follows. Catalyzes the reversible reaction in which hydroxymethyl group from 5,10-methylenetetrahydrofolate is transferred onto alpha-ketoisovalerate to form ketopantoate. This Staphylothermus marinus (strain ATCC 43588 / DSM 3639 / JCM 9404 / F1) protein is 3-methyl-2-oxobutanoate hydroxymethyltransferase.